The sequence spans 294 residues: uncharacterized protein (294 aa).

Residues 1-18 (MKKLLLIITVFFTCSAVA) form the signal peptide.

This is an uncharacterized protein from Rickettsia bellii (strain RML369-C).